A 224-amino-acid chain; its full sequence is Enolase-phosphatase E1 (224 aa).

This sequence belongs to the HAD-like hydrolase superfamily. MasA/MtnC family. As to quaternary structure, monomer. The cofactor is Mg(2+).

It catalyses the reaction 5-methylsulfanyl-2,3-dioxopentyl phosphate + H2O = 1,2-dihydroxy-5-(methylsulfanyl)pent-1-en-3-one + phosphate. It participates in amino-acid biosynthesis; L-methionine biosynthesis via salvage pathway; L-methionine from S-methyl-5-thio-alpha-D-ribose 1-phosphate: step 3/6. Its pathway is amino-acid biosynthesis; L-methionine biosynthesis via salvage pathway; L-methionine from S-methyl-5-thio-alpha-D-ribose 1-phosphate: step 4/6. Its function is as follows. Bifunctional enzyme that catalyzes the enolization of 2,3-diketo-5-methylthiopentyl-1-phosphate (DK-MTP-1-P) into the intermediate 2-hydroxy-3-keto-5-methylthiopentenyl-1-phosphate (HK-MTPenyl-1-P), which is then dephosphorylated to form the acireductone 1,2-dihydroxy-3-keto-5-methylthiopentene (DHK-MTPene). The polypeptide is Enolase-phosphatase E1 (Thioalkalivibrio sulfidiphilus (strain HL-EbGR7)).